The following is a 258-amino-acid chain: Snake venom serine protease 2 (258 aa).

A signal peptide spans 1-18 (MVLIRVLANLLILQLSYA). Residues 19–24 (QKSSEL) constitute a propeptide that is removed on maturation. The Peptidase S1 domain occupies 25 to 249 (VFGGRPCNIN…YNDWVQSIIA (225 aa)). 6 disulfides stabilise this stretch: cysteine 31-cysteine 163, cysteine 50-cysteine 66, cysteine 98-cysteine 256, cysteine 142-cysteine 210, cysteine 174-cysteine 189, and cysteine 200-cysteine 225. Residue asparagine 44 is glycosylated (N-linked (GlcNAc...) asparagine). Residues histidine 65 and aspartate 110 each act as charge relay system in the active site. 2 N-linked (GlcNAc...) asparagine glycosylation sites follow: asparagine 122 and asparagine 185. The Charge relay system role is filled by serine 204.

This sequence belongs to the peptidase S1 family. Snake venom subfamily. In terms of assembly, monomer. In terms of tissue distribution, expressed by the venom gland.

It localises to the secreted. Its activity is regulated as follows. Inhibited by PMSF at 2 mM concentration but not by EDTA. Its function is as follows. Snake venom serine protease that may act in the hemostasis system of the prey. Has weak fibrinogen clotting activity. Possesses amidolysis activity towards S-2251 (substrate for plasmin) but has no hydrolytic activity with S-2302 (plasma kallikrein substrate) or S-2238 (thrombin substrate). The polypeptide is Snake venom serine protease 2 (Protobothrops jerdonii (Jerdon's pitviper)).